We begin with the raw amino-acid sequence, 205 residues long: Pyrrolidone-carboxylate peptidase (205 aa).

Catalysis depends on residues Glu-79, Cys-142, and His-165.

Belongs to the peptidase C15 family. Homotetramer.

The protein resides in the cytoplasm. It catalyses the reaction Release of an N-terminal pyroglutamyl group from a polypeptide, the second amino acid generally not being Pro.. Its function is as follows. Removes 5-oxoproline from various penultimate amino acid residues except L-proline. The sequence is that of Pyrrolidone-carboxylate peptidase from Gloeobacter violaceus (strain ATCC 29082 / PCC 7421).